A 287-amino-acid chain; its full sequence is Bifunctional protein FolD (287 aa).

NADP(+) is bound by residues 167-169 and Thr192; that span reads GRS.

Belongs to the tetrahydrofolate dehydrogenase/cyclohydrolase family. Homodimer.

It catalyses the reaction (6R)-5,10-methylene-5,6,7,8-tetrahydrofolate + NADP(+) = (6R)-5,10-methenyltetrahydrofolate + NADPH. It carries out the reaction (6R)-5,10-methenyltetrahydrofolate + H2O = (6R)-10-formyltetrahydrofolate + H(+). It participates in one-carbon metabolism; tetrahydrofolate interconversion. Functionally, catalyzes the oxidation of 5,10-methylenetetrahydrofolate to 5,10-methenyltetrahydrofolate and then the hydrolysis of 5,10-methenyltetrahydrofolate to 10-formyltetrahydrofolate. The chain is Bifunctional protein FolD from Sorangium cellulosum (strain So ce56) (Polyangium cellulosum (strain So ce56)).